We begin with the raw amino-acid sequence, 150 residues long: Cytochrome c-type biogenesis protein CcmE (150 aa).

Residues 1–7 (MTRKQKR) are Cytoplasmic-facing. A helical; Signal-anchor for type II membrane protein transmembrane segment spans residues 8–28 (LAIIGGGVAFLTAAVLLVMFA). Topologically, residues 29–150 (FSQAVAYFYV…VTLGGEENIR (122 aa)) are periplasmic. Residues His123 and Tyr127 each contribute to the heme site.

The protein belongs to the CcmE/CycJ family.

Its subcellular location is the cell inner membrane. Functionally, heme chaperone required for the biogenesis of c-type cytochromes. Transiently binds heme delivered by CcmC and transfers the heme to apo-cytochromes in a process facilitated by CcmF and CcmH. This is Cytochrome c-type biogenesis protein CcmE from Rhizobium meliloti (strain 1021) (Ensifer meliloti).